A 573-amino-acid chain; its full sequence is BICD family-like cargo adapter 1 (573 aa).

Residues 67–97 (ERPSDPGEHPQAEPGSLAEGAGPQPPPSQDP) form a disordered region. Positions 68-77 (RPSDPGEHPQ) are enriched in basic and acidic residues. The short motif at 113–117 (AARLG) is the CC1 box element. A coiled-coil region spans residues 118-376 (KALLERNQDM…QLWEAYCQVR (259 aa)). Residues 386–412 (DSADSAVSTDSSMDESSETSSAKDVPA) are disordered. Over residues 387-396 (SADSAVSTDS) the composition is skewed to low complexity. The stretch at 440 to 525 (LSVEMTALKE…LEAWQDDMHR (86 aa)) forms a coiled coil.

Belongs to the BICDR family. As to quaternary structure, part of a tripartite complex with dynein and dynactin, acts an adapter linking the dynein motor complex and dynactin. Interacts with KIF1C. Interacts with RAB6A and RAB6B; interaction is specific to Rab6.

The protein resides in the cytoplasm. It is found in the cytoskeleton. The protein localises to the microtubule organizing center. Its subcellular location is the centrosome. Functionally, acts as an adapter protein linking the dynein motor complex to various cargos and converts dynein from a non-processive to a highly processive motor in the presence of dynactin. Facilitates the interaction between dynein and dynactin and activates dynein processivity (the ability to move along a microtubule for a long distance without falling off the track). Predominantly recruits 2 dyneins, which increases both the force and speed of the microtubule motor. Component of secretory vesicle machinery in developing neurons that acts as a regulator of neurite outgrowth. Regulates the secretory vesicle transport by controlling the accumulation of Rab6-containing secretory vesicles in the pericentrosomal region restricting anterograde secretory transport during the early phase of neuronal differentiation, thereby inhibiting neuritogenesis. The chain is BICD family-like cargo adapter 1 (BICDL1) from Homo sapiens (Human).